A 310-amino-acid chain; its full sequence is tRNA dimethylallyltransferase (310 aa).

14-21 (GPTASGKT) provides a ligand contact to ATP. A substrate-binding site is contributed by 16–21 (TASGKT). Interaction with substrate tRNA stretches follow at residues 39–42 (DSAL), 163–167 (QRLSR), and 244–249 (RCVGYR).

It belongs to the IPP transferase family. As to quaternary structure, monomer. It depends on Mg(2+) as a cofactor.

It carries out the reaction adenosine(37) in tRNA + dimethylallyl diphosphate = N(6)-dimethylallyladenosine(37) in tRNA + diphosphate. Catalyzes the transfer of a dimethylallyl group onto the adenine at position 37 in tRNAs that read codons beginning with uridine, leading to the formation of N6-(dimethylallyl)adenosine (i(6)A). The sequence is that of tRNA dimethylallyltransferase from Tolumonas auensis (strain DSM 9187 / NBRC 110442 / TA 4).